The following is a 334-amino-acid chain: Tyrosine-protein kinase SRK3 (334 aa).

The SH2 domain maps to 1–42; sequence IRTLDDGGFYMANRISFPTLQNLVSHYMMDADGLAQRLSRPC. One can recognise a Protein kinase domain in the interval 66-321; that stretch reads IQLQRKLGQG…LKNLLEDYYV (256 aa). ATP contacts are provided by residues 72–80 and lysine 94; that span reads LGQGNFGEV. Aspartate 186 functions as the Proton acceptor in the catalytic mechanism.

This sequence belongs to the protein kinase superfamily. Tyr protein kinase family.

It localises to the cytoplasm. It catalyses the reaction L-tyrosyl-[protein] + ATP = O-phospho-L-tyrosyl-[protein] + ADP + H(+). In Spongilla lacustris (Freshwater sponge), this protein is Tyrosine-protein kinase SRK3 (SRK3).